A 493-amino-acid polypeptide reads, in one-letter code: Glutamyl-tRNA(Gln) amidotransferase subunit A (493 aa).

Active-site charge relay system residues include K79 and S159. S183 (acyl-ester intermediate) is an active-site residue.

The protein belongs to the amidase family. GatA subfamily. As to quaternary structure, heterotrimer of A, B and C subunits.

The catalysed reaction is L-glutamyl-tRNA(Gln) + L-glutamine + ATP + H2O = L-glutaminyl-tRNA(Gln) + L-glutamate + ADP + phosphate + H(+). Allows the formation of correctly charged Gln-tRNA(Gln) through the transamidation of misacylated Glu-tRNA(Gln) in organisms which lack glutaminyl-tRNA synthetase. The reaction takes place in the presence of glutamine and ATP through an activated gamma-phospho-Glu-tRNA(Gln). In Rhizobium etli (strain ATCC 51251 / DSM 11541 / JCM 21823 / NBRC 15573 / CFN 42), this protein is Glutamyl-tRNA(Gln) amidotransferase subunit A.